The following is a 1072-amino-acid chain: Rho family-interacting cell polarization regulator 2 (1072 aa).

Positions 83 to 112 (NGLDEYLEVHQTELDKLTAQLKDMRRNSRL) form a coiled coil. Positions 173–470 (RESLTEINRS…ATTATQHRAR (298 aa)) are necessary for interaction with NCAM and myoblast protrusion formation. Disordered regions lie at residues 439-465 (DRVPPANSAEPSSAHVTSSPDIATTAT) and 683-718 (EVEKNSYRTEHPEARGHLQRSLTEDTGVGTSVAGSP). Positions 447–460 (AEPSSAHVTSSPDI) are enriched in polar residues. Over residues 683–698 (EVEKNSYRTEHPEARG) the composition is skewed to basic and acidic residues.

This sequence belongs to the RIPOR family. In terms of assembly, homooligomer; homooligomerization is regulated by RHOC and leads to the formation of concatemers through the association of N- and C-termini. Interacts with NCAM; this interaction is necessary for myoblast protrusion formation. As to expression, expressed in myoblast and myotubes (at protein level). Expressed in brain, eyes and skeletal muscle.

Its subcellular location is the cytoplasm. The protein resides in the cytoskeleton. The protein localises to the cell projection. It localises to the filopodium. It is found in the apical cell membrane. Its subcellular location is the stereocilium. The protein resides in the stereocilium membrane. In terms of biological role, acts as an inhibitor of the small GTPase RHOA and plays several roles in the regulation of myoblast and hair cell differentiation, lymphocyte T proliferation and neutrophil polarization. Plays a role in fetal mononuclear myoblast differentiation by promoting filopodia and myotube formation. Maintains naive T lymphocytes in a quiescent state and prevents chemokine-induced T lymphocyte responses, such as cell adhesion, polarization and migration. Involved also in the regulation of neutrophil polarization, chemotaxis and adhesion. Required for normal development of inner and outer hair cell stereocilia within the cochlea of the inner ear. Plays a role for maintaining the structural organization of the basal domain of stereocilia. Involved in mechanosensory hair cell function. Required for normal hearing. The protein is Rho family-interacting cell polarization regulator 2 of Coturnix japonica (Japanese quail).